The primary structure comprises 809 residues: Leucine--tRNA ligase (809 aa).

The short motif at 40–50 (PYPSGRIHMGH) is the 'HIGH' region element. A 'KMSKS' region motif is present at residues 579 to 583 (KMSKS). Position 582 (lysine 582) interacts with ATP.

The protein belongs to the class-I aminoacyl-tRNA synthetase family.

The protein localises to the cytoplasm. The enzyme catalyses tRNA(Leu) + L-leucine + ATP = L-leucyl-tRNA(Leu) + AMP + diphosphate. The polypeptide is Leucine--tRNA ligase (Campylobacter jejuni subsp. jejuni serotype O:23/36 (strain 81-176)).